Reading from the N-terminus, the 486-residue chain is uncharacterized protein (486 aa).

Residues 1–25 (MGTMRSVYLIIIIILFFAFISLSFG) form the signal peptide. Composition is skewed to basic and acidic residues over residues 306–316 (KKEEKENEESS) and 326–349 (KKEE…KQEK). Positions 306–349 (KKEEKENEESSKTINQMQRHKKEEKSQTQETKKPSKNEMNKQEK) are disordered.

This is an uncharacterized protein from Methanocaldococcus jannaschii (strain ATCC 43067 / DSM 2661 / JAL-1 / JCM 10045 / NBRC 100440) (Methanococcus jannaschii).